Here is a 203-residue protein sequence, read N- to C-terminus: 22.3 kDa class VI heat shock protein (203 aa).

The 118-residue stretch at alanine 86–alanine 203 folds into the sHSP domain.

Belongs to the small heat shock protein (HSP20) family. May form oligomeric structures.

The protein localises to the cytoplasm. This is 22.3 kDa class VI heat shock protein (HSP22.3) from Oryza sativa subsp. japonica (Rice).